Consider the following 104-residue polypeptide: Protein translation factor SUI1 homolog (104 aa).

This sequence belongs to the SUI1 family.

The chain is Protein translation factor SUI1 homolog from Ignicoccus hospitalis (strain KIN4/I / DSM 18386 / JCM 14125).